The sequence spans 268 residues: Probable intron-encoded DNA endonuclease 1 (268 aa).

The protein belongs to the LAGLIDADG endonuclease family.

Its subcellular location is the mitochondrion. Functionally, mitochondrial DNA endonuclease involved in intron homing. The polypeptide is Probable intron-encoded DNA endonuclease 1 (hegI1) (Mycosarcoma maydis (Corn smut fungus)).